The chain runs to 506 residues: Phase 2 flagellin (506 aa).

This sequence belongs to the bacterial flagellin family.

It localises to the secreted. Its subcellular location is the bacterial flagellum. Its function is as follows. Flagellin is the subunit protein which polymerizes to form the filaments of bacterial flagella. The protein is Phase 2 flagellin (fljB) of Salmonella typhimurium (strain LT2 / SGSC1412 / ATCC 700720).